Consider the following 842-residue polypeptide: DNA topoisomerase-like protein cin-4 (842 aa).

Basic and acidic residues predominate over residues methionine 1 to asparagine 26. The disordered stretch occupies residues methionine 1–glycine 50. The 470-residue stretch at isoleucine 314–leucine 783 folds into the Topo IIA-type catalytic domain.

Belongs to the type II topoisomerase family.

Its function is as follows. Plays a role in the removal of cohesin from kinetochores on mitotic chromosomes and is required for centromere resolution. This chain is DNA topoisomerase-like protein cin-4, found in Caenorhabditis elegans.